A 98-amino-acid chain; its full sequence is Acylphosphatase (98 aa).

An Acylphosphatase-like domain is found at 10–96 (ARLLRIRGRV…TDGAGFDCLP (87 aa)). Active-site residues include Arg25 and Asn43.

It belongs to the acylphosphatase family.

It carries out the reaction an acyl phosphate + H2O = a carboxylate + phosphate + H(+). The sequence is that of Acylphosphatase (acyP) from Azoarcus sp. (strain BH72).